The following is a 322-amino-acid chain: Sideroflexin-1 (322 aa).

An N-acetylserine modification is found at S2. Topologically, residues 2–102 (SGELPPNINI…MSAQVPMNMT (101 aa)) are mitochondrial matrix. The helical transmembrane segment at 103–120 (ITGCMMTFYRTTPAVLFW) threads the bilayer. The Mitochondrial intermembrane portion of the chain corresponds to 121-146 (QWINQSFNAVVNYTNRSGDAPLTVNE). The chain crosses the membrane as a helical span at residues 147–167 (LGTAYVSATTGAVATALGLNA). Over 168-174 (LTKHVSP) the chain is Mitochondrial matrix. A helical membrane pass occupies residues 175 to 195 (LIGRFVPFAAVAAANCINIPL). The Mitochondrial intermembrane portion of the chain corresponds to 196 to 228 (MRQRELKVGIPVTDENGNRLGESANAAKQAITQ). The chain crosses the membrane as a helical span at residues 229 to 249 (VVVSRILMAAPGMAIPPFIMN). Topologically, residues 250 to 266 (TLEKKAFLKRFPWMSAP) are mitochondrial matrix. A helical transmembrane segment spans residues 267–287 (IQVGLVGFCLVFATPLCCALF). The Mitochondrial intermembrane portion of the chain corresponds to 288–322 (PQKSSMSVTSLEAELQAKIQESHPELRRVYFNKGL).

It belongs to the sideroflexin family. Highly expressed in tissues with high one-carbon metabolism activity, such as blood, liver and kidney.

The protein resides in the mitochondrion inner membrane. It carries out the reaction L-serine(in) = L-serine(out). The enzyme catalyses L-alanine(in) = L-alanine(out). It catalyses the reaction L-cysteine(in) = L-cysteine(out). Its function is as follows. Amino acid transporter importing serine, an essential substrate of the mitochondrial branch of the one-carbon pathway, into mitochondria. Mitochondrial serine is then converted to glycine and formate, which exits to the cytosol where it is used to generate the charged folates that serve as one-carbon donors. May also transport other amino acids including alanine and cysteine. The chain is Sideroflexin-1 from Homo sapiens (Human).